The following is a 152-amino-acid chain: Ribosome maturation factor RimP (152 aa).

This sequence belongs to the RimP family.

The protein resides in the cytoplasm. Required for maturation of 30S ribosomal subunits. The chain is Ribosome maturation factor RimP from Burkholderia vietnamiensis (strain G4 / LMG 22486) (Burkholderia cepacia (strain R1808)).